A 142-amino-acid chain; its full sequence is SsrA-binding protein (142 aa).

It belongs to the SmpB family.

The protein resides in the cytoplasm. Required for rescue of stalled ribosomes mediated by trans-translation. Binds to transfer-messenger RNA (tmRNA), required for stable association of tmRNA with ribosomes. tmRNA and SmpB together mimic tRNA shape, replacing the anticodon stem-loop with SmpB. tmRNA is encoded by the ssrA gene; the 2 termini fold to resemble tRNA(Ala) and it encodes a 'tag peptide', a short internal open reading frame. During trans-translation Ala-aminoacylated tmRNA acts like a tRNA, entering the A-site of stalled ribosomes, displacing the stalled mRNA. The ribosome then switches to translate the ORF on the tmRNA; the nascent peptide is terminated with the 'tag peptide' encoded by the tmRNA and targeted for degradation. The ribosome is freed to recommence translation, which seems to be the essential function of trans-translation. The sequence is that of SsrA-binding protein from Mycoplasma mobile (strain ATCC 43663 / 163K / NCTC 11711) (Mesomycoplasma mobile).